The primary structure comprises 435 residues: uncharacterized protein (435 aa).

One can recognise an F-box domain in the interval 7 to 58; it reads PFPITKLPLVPRCKILKFFDYGDLLDISLCSKRMAQTVRDIHITADLHYLTL.

This is an uncharacterized protein from Caenorhabditis elegans.